The following is a 319-amino-acid chain: Chromoplast-specific carotenoid-associated protein C2, chromoplastic (319 aa).

The transit peptide at 1–55 (MTSIAFCNAFTVNPFLAAARRSPPPLTPLTSVALSPARKPRILAIFHPRTFPSFR) directs the protein to the chromoplast.

This sequence belongs to the PAP/fibrillin family.

The protein localises to the plastid. It is found in the chromoplast. Its function is as follows. May be involved in carotenoid sequestration within chromoplasts. The protein is Chromoplast-specific carotenoid-associated protein C2, chromoplastic (CHRC2) of Oncidium hybrid cultivar (Orchid).